A 341-amino-acid polypeptide reads, in one-letter code: tRNA N6-adenosine threonylcarbamoyltransferase (341 aa).

Fe cation-binding residues include His118 and His122. Substrate is bound by residues 141 to 145 (LVSGG), Asp174, Gly187, and Asn281. Residue Asp309 participates in Fe cation binding.

This sequence belongs to the KAE1 / TsaD family. Fe(2+) is required as a cofactor.

Its subcellular location is the cytoplasm. The catalysed reaction is L-threonylcarbamoyladenylate + adenosine(37) in tRNA = N(6)-L-threonylcarbamoyladenosine(37) in tRNA + AMP + H(+). Required for the formation of a threonylcarbamoyl group on adenosine at position 37 (t(6)A37) in tRNAs that read codons beginning with adenine. Is involved in the transfer of the threonylcarbamoyl moiety of threonylcarbamoyl-AMP (TC-AMP) to the N6 group of A37, together with TsaE and TsaB. TsaD likely plays a direct catalytic role in this reaction. The sequence is that of tRNA N6-adenosine threonylcarbamoyltransferase from Desulfitobacterium hafniense (strain Y51).